A 208-amino-acid polypeptide reads, in one-letter code: Putative dioxygenase RT0384 (208 aa).

This sequence belongs to the intradiol ring-cleavage dioxygenase family.

This is Putative dioxygenase RT0384 from Rickettsia typhi (strain ATCC VR-144 / Wilmington).